We begin with the raw amino-acid sequence, 102 residues long: Urease subunit beta (102 aa).

It belongs to the urease beta subunit family. Heterotrimer of UreA (gamma), UreB (beta) and UreC (alpha) subunits. Three heterotrimers associate to form the active enzyme.

Its subcellular location is the cytoplasm. The catalysed reaction is urea + 2 H2O + H(+) = hydrogencarbonate + 2 NH4(+). It functions in the pathway nitrogen metabolism; urea degradation; CO(2) and NH(3) from urea (urease route): step 1/1. This is Urease subunit beta from Clostridium perfringens.